The chain runs to 408 residues: Aminoacylase-1 (408 aa).

Histidine 80 provides a ligand contact to Zn(2+). Aspartate 82 is an active-site residue. Aspartate 113 contributes to the Zn(2+) binding site. Glutamate 147 serves as the catalytic Proton acceptor. Zn(2+)-binding residues include glutamate 148, glutamate 175, and histidine 373.

It belongs to the peptidase M20A family. In terms of assembly, homodimer. Interacts with SPHK1. Zn(2+) serves as cofactor. As to expression, expression is highest in kidney, strong in brain and weaker in placenta and spleen.

It localises to the cytoplasm. It catalyses the reaction an N-acyl-L-amino acid + H2O = an L-alpha-amino acid + a carboxylate. The catalysed reaction is N-acetyl-L-methionine + H2O = L-methionine + acetate. It carries out the reaction N-acetyl-L-glutamine + H2O = L-glutamine + acetate. Functionally, catalyzes the hydrolysis of N-acetylated amino acids to acetate and free amino acids. This is Aminoacylase-1 (ACY1) from Homo sapiens (Human).